A 447-amino-acid chain; its full sequence is Rab GDP dissociation inhibitor alpha (447 aa).

Position 427 is a phosphoserine (Ser427).

Belongs to the Rab GDI family. Interacts with RHOH. Interacts with the non-phosphorylated forms of RAB1A, RAB3A, RAB5A, RAB5B, RAB5C, RAB8A, RAB8B, RAB10, RAB12, RAB35, and RAB43. Interacts with RAB3A.

The protein resides in the cytoplasm. It localises to the golgi apparatus. It is found in the trans-Golgi network. Its function is as follows. Regulates the GDP/GTP exchange reaction of most Rab proteins by inhibiting the dissociation of GDP from them, and the subsequent binding of GTP to them. Promotes the dissociation of GDP-bound Rab proteins from the membrane and inhibits their activation. Promotes the dissociation of RAB1A, RAB3A, RAB5A and RAB10 from membranes. The sequence is that of Rab GDP dissociation inhibitor alpha (GDI1) from Bos taurus (Bovine).